Consider the following 330-residue polypeptide: Phosphate acyltransferase (330 aa).

It belongs to the PlsX family. Homodimer. Probably interacts with PlsY.

The protein localises to the cytoplasm. It carries out the reaction a fatty acyl-[ACP] + phosphate = an acyl phosphate + holo-[ACP]. It participates in lipid metabolism; phospholipid metabolism. Its function is as follows. Catalyzes the reversible formation of acyl-phosphate (acyl-PO(4)) from acyl-[acyl-carrier-protein] (acyl-ACP). This enzyme utilizes acyl-ACP as fatty acyl donor, but not acyl-CoA. This Bacillus cytotoxicus (strain DSM 22905 / CIP 110041 / 391-98 / NVH 391-98) protein is Phosphate acyltransferase.